We begin with the raw amino-acid sequence, 603 residues long: Elongation factor 4 (603 aa).

Residues 7-191 (DNIRNFSIVA…AIVTRLPPPK (185 aa)) form the tr-type G domain. GTP-binding positions include 19-24 (DHGKST) and 138-141 (NKVD).

The protein belongs to the TRAFAC class translation factor GTPase superfamily. Classic translation factor GTPase family. LepA subfamily.

It localises to the cell inner membrane. The enzyme catalyses GTP + H2O = GDP + phosphate + H(+). Required for accurate and efficient protein synthesis under certain stress conditions. May act as a fidelity factor of the translation reaction, by catalyzing a one-codon backward translocation of tRNAs on improperly translocated ribosomes. Back-translocation proceeds from a post-translocation (POST) complex to a pre-translocation (PRE) complex, thus giving elongation factor G a second chance to translocate the tRNAs correctly. Binds to ribosomes in a GTP-dependent manner. This chain is Elongation factor 4, found in Rhodopseudomonas palustris (strain ATCC BAA-98 / CGA009).